Consider the following 203-residue polypeptide: Superoxide dismutase [Mn] (203 aa).

Residues His-31, His-79, Asp-161, and His-165 each contribute to the Mn(2+) site.

Belongs to the iron/manganese superoxide dismutase family. Mn(2+) serves as cofactor.

It catalyses the reaction 2 superoxide + 2 H(+) = H2O2 + O2. In terms of biological role, destroys superoxide anion radicals which are normally produced within the cells and which are toxic to biological systems. The polypeptide is Superoxide dismutase [Mn] (sod) (Haloarcula marismortui (strain ATCC 43049 / DSM 3752 / JCM 8966 / VKM B-1809) (Halobacterium marismortui)).